The chain runs to 93 residues: Guanine nucleotide-binding protein subunit gamma (93 aa).

Positions 1-22 are disordered; sequence MPQYASRDVGDPSQIKKNKQSM. Residue cysteine 89 is the site of S-palmitoyl cysteine attachment. Residue cysteine 90 is modified to Cysteine methyl ester. A lipid anchor (S-farnesyl cysteine) is attached at cysteine 90. Positions 91-93 are cleaved as a propeptide — removed in mature form; sequence VVM.

Belongs to the G protein gamma family. As to quaternary structure, g proteins are composed of 3 units, alpha, beta and gamma.

The protein resides in the membrane. The polypeptide is Guanine nucleotide-binding protein subunit gamma (gng-1) (Neurospora crassa (strain ATCC 24698 / 74-OR23-1A / CBS 708.71 / DSM 1257 / FGSC 987)).